A 1500-amino-acid polypeptide reads, in one-letter code: Copper-transporting ATPase 1 (1500 aa).

Residues 1–653 (MDPSMGVNSV…KREIRQWRRS (653 aa)) are Cytoplasmic-facing. 2 HMA domains span residues 8–74 (NSVT…FDAV) and 85–151 (TDTL…LDTG). Cu(+) is bound by residues Thr-18, Cys-19, and Cys-22. Thr-152 is subject to Phosphothreonine. In terms of domain architecture, HMA 3 spans 171 to 237 (VVLKMKVEGM…QIEAMGFPAF (67 aa)). Cu(+) is bound by residues Cys-182 and Cys-185. Ser-270 is subject to Phosphoserine. One can recognise an HMA 4 domain in the interval 277-343 (STATFIIDGM…AIEAVSPGLY (67 aa)). Cu(+) is bound by residues Cys-288 and Cys-291. Thr-327 is modified (phosphothreonine). Residues Ser-339, Ser-353, Ser-357, and Ser-362 each carry the phosphoserine modification. HMA domains follow at residues 377 to 443 (QETV…FDAT), 488 to 554 (SKCY…FGAT), and 564 to 630 (GVLE…FEAS). The Cu(+) site is built by Cys-388, Cys-391, Cys-499, Cys-502, Cys-575, and Cys-578. The chain crosses the membrane as a helical span at residues 654 to 675 (FLVSLFFCIPVMGLMIYMMVMD). The Extracellular portion of the chain corresponds to 676–714 (HHFATLHHNQNMSKEEMINLHSSMFLERQILPGLSVMNL). Asn-686 carries an N-linked (GlcNAc...) asparagine glycan. Residues 715-734 (LSFLLCVPVQFFGGWYFYIQ) traverse the membrane as a helical segment. Topologically, residues 735–741 (AYKALKH) are cytoplasmic. The chain crosses the membrane as a helical span at residues 742 to 762 (KTANMDVLIVLATTIAFAYSL). Residues 763-781 (IILLVAMYERAKVNPITFF) are Extracellular-facing. A helical membrane pass occupies residues 782–802 (DTPPMLFVFIALGRWLEHIAK). The Cytoplasmic segment spans residues 803 to 936 (GKTSEALAKL…KAPIQQFADK (134 aa)). Residues 937 to 959 (LSGYFVPFIVFVSIATLLVWIVI) traverse the membrane as a helical segment. At 960–989 (GFLNFEIVETYFPGYNRSISRTETIIRFAF) the chain is on the extracellular side. A glycan (N-linked (GlcNAc...) asparagine) is linked at Asn-975. The chain crosses the membrane as a helical span at residues 990-1011 (QASITVLCIACPCSLGLATPTA). The Cytoplasmic portion of the chain corresponds to 1012–1356 (VMVGTGVGAQ…LSRKTVKRIR (345 aa)). Catalysis depends on Asp-1044, which acts as the 4-aspartylphosphate intermediate. Glu-1081 is a binding site for ATP. Residue Thr-1212 is modified to Phosphothreonine. Mg(2+)-binding residues include Asp-1301 and Asp-1305. The chain crosses the membrane as a helical span at residues 1357–1374 (INFVFALIYNLVGIPIAA). Residues 1375-1385 (GVFMPIGLVLQ) lie on the Extracellular side of the membrane. The helical transmembrane segment at 1386–1405 (PWMGSAAMAASSVSVVLSSL) threads the bilayer. Over 1406 to 1500 (FLKLYRKPTY…DFREDDDTAL (95 aa)) the chain is Cytoplasmic. Phosphoserine occurs at positions 1430, 1432, 1460, 1463, and 1466. The Endocytosis signal signature appears at 1467–1468 (LL). Residues Ser-1469, Ser-1473, Ser-1476, and Ser-1486 each carry the phosphoserine modification. The segment at 1486-1500 (SLLVGDFREDDDTAL) is PDZD11-binding. Residues 1487–1488 (LL) carry the Endocytosis signal motif.

The protein belongs to the cation transport ATPase (P-type) (TC 3.A.3) family. Type IB subfamily. In terms of assembly, monomer. Interacts with PDZD11. Interacts with ATOX1 and COMMD1. Interacts with TYRP1. Directly interacts with SOD3; this interaction is copper-dependent and is required for SOD3 activity. As to expression, widely expressed including in heart, brain, lung, muscle, kidney, pancreas, and to a lesser extent placenta. Expressed in fibroblasts, aortic smooth muscle cells, aortic endothelial cells and umbilical vein endothelial cells (at protein level). Expressed in cerebellum and brain cortex.

The protein localises to the golgi apparatus. Its subcellular location is the trans-Golgi network membrane. It is found in the cell membrane. It localises to the melanosome membrane. The protein resides in the early endosome membrane. The protein localises to the cell projection. Its subcellular location is the axon. It is found in the dendrite. It localises to the postsynaptic density. The protein resides in the cytoplasm. The protein localises to the cytosol. Its subcellular location is the endoplasmic reticulum. It catalyses the reaction Cu(+)(in) + ATP + H2O = Cu(+)(out) + ADP + phosphate + H(+). Functionally, ATP-driven copper (Cu(+)) ion pump that plays an important role in intracellular copper ion homeostasis. Within a catalytic cycle, acquires Cu(+) ion from donor protein on the cytoplasmic side of the membrane and delivers it to acceptor protein on the lumenal side. The transfer of Cu(+) ion across the membrane is coupled to ATP hydrolysis and is associated with a transient phosphorylation that shifts the pump conformation from inward-facing to outward-facing state. Under physiological conditions, at low cytosolic copper concentration, it is localized at the trans-Golgi network (TGN) where it transfers Cu(+) ions to cuproenzymes of the secretory pathway. Upon elevated cytosolic copper concentrations, it relocalizes to the plasma membrane where it is responsible for the export of excess Cu(+) ions. May play a dual role in neuron function and survival by regulating cooper efflux and neuronal transmission at the synapse as well as by supplying Cu(+) ions to enzymes such as PAM, TYR and SOD3. In the melanosomes of pigmented cells, provides copper cofactor to TYR to form an active TYR holoenzyme for melanin biosynthesis. This Homo sapiens (Human) protein is Copper-transporting ATPase 1.